Reading from the N-terminus, the 27-residue chain is Vasotocin-neurophysin VT (27 aa).

A disulfide bond links Cys-1 and Cys-6. Gly-9 is modified (glycine amide).

It belongs to the vasopressin/oxytocin family.

In terms of biological role, vasotocin is an antidiuretic hormone. In Sclerophrys regularis (Common African toad), this protein is Vasotocin-neurophysin VT.